A 329-amino-acid chain; its full sequence is Ribosomal RNA small subunit methyltransferase H (329 aa).

S-adenosyl-L-methionine-binding positions include 47-49, Asp-67, Phe-93, Asp-115, and Gln-122; that span reads GGH.

This sequence belongs to the methyltransferase superfamily. RsmH family.

The protein localises to the cytoplasm. It catalyses the reaction cytidine(1402) in 16S rRNA + S-adenosyl-L-methionine = N(4)-methylcytidine(1402) in 16S rRNA + S-adenosyl-L-homocysteine + H(+). Its function is as follows. Specifically methylates the N4 position of cytidine in position 1402 (C1402) of 16S rRNA. This chain is Ribosomal RNA small subunit methyltransferase H, found in Blochmanniella pennsylvanica (strain BPEN).